The sequence spans 236 residues: Purine nucleoside phosphorylase DeoD-type (236 aa).

Histidine 4 is an a purine D-ribonucleoside binding site. Phosphate contacts are provided by residues glycine 20, arginine 24, arginine 43, and 87 to 90 (RVGS). A purine D-ribonucleoside is bound by residues 179-181 (EME) and 203-204 (SD). Catalysis depends on aspartate 204, which acts as the Proton donor.

Belongs to the PNP/UDP phosphorylase family. As to quaternary structure, homohexamer; trimer of homodimers.

The enzyme catalyses a purine D-ribonucleoside + phosphate = a purine nucleobase + alpha-D-ribose 1-phosphate. It catalyses the reaction a purine 2'-deoxy-D-ribonucleoside + phosphate = a purine nucleobase + 2-deoxy-alpha-D-ribose 1-phosphate. Its function is as follows. Catalyzes the reversible phosphorolytic breakdown of the N-glycosidic bond in the beta-(deoxy)ribonucleoside molecules, with the formation of the corresponding free purine bases and pentose-1-phosphate. In Limosilactobacillus reuteri (strain DSM 20016) (Lactobacillus reuteri), this protein is Purine nucleoside phosphorylase DeoD-type.